Here is a 285-residue protein sequence, read N- to C-terminus: Ribosomal RNA small subunit methyltransferase A (285 aa).

S-adenosyl-L-methionine contacts are provided by Asn11, Leu13, Gly37, Glu57, Asp85, and Asn105.

Belongs to the class I-like SAM-binding methyltransferase superfamily. rRNA adenine N(6)-methyltransferase family. RsmA subfamily.

The protein localises to the cytoplasm. It carries out the reaction adenosine(1518)/adenosine(1519) in 16S rRNA + 4 S-adenosyl-L-methionine = N(6)-dimethyladenosine(1518)/N(6)-dimethyladenosine(1519) in 16S rRNA + 4 S-adenosyl-L-homocysteine + 4 H(+). In terms of biological role, specifically dimethylates two adjacent adenosines (A1518 and A1519) in the loop of a conserved hairpin near the 3'-end of 16S rRNA in the 30S particle. May play a critical role in biogenesis of 30S subunits. In Campylobacter curvus (strain 525.92), this protein is Ribosomal RNA small subunit methyltransferase A.